Here is a 149-residue protein sequence, read N- to C-terminus: Pleckstrin homology domain-containing family J member 1 (149 aa).

Residues 15–108 form the PH domain; it reads PAEMAAELGM…WMAALRQASY (94 aa).

In Bos taurus (Bovine), this protein is Pleckstrin homology domain-containing family J member 1 (PLEKHJ1).